The sequence spans 243 residues: Cell division protein ZipA (243 aa).

The Periplasmic segment spans residues 1 to 4 (MSDM). The chain crosses the membrane as a helical span at residues 5 to 25 (AMIRIGILIAGLLLVAAIFLF). The Cytoplasmic portion of the chain corresponds to 26–243 (GRPKKSPQGR…APPLTKSPRW (218 aa)). Residues 30-89 (KSPQGRRVDKGEGQPRERREPVISSEFGAEGDAAERAEGVEQSELNLEGQDASGGNEVGK) are disordered. A compositionally biased stretch (basic and acidic residues) spans 35–50 (RRVDKGEGQPRERREP).

Belongs to the ZipA family. Interacts with FtsZ via their C-terminal domains.

It localises to the cell inner membrane. Functionally, essential cell division protein that stabilizes the FtsZ protofilaments by cross-linking them and that serves as a cytoplasmic membrane anchor for the Z ring. Also required for the recruitment to the septal ring of downstream cell division proteins. The chain is Cell division protein ZipA from Xanthomonas axonopodis pv. citri (strain 306).